Here is a 515-residue protein sequence, read N- to C-terminus: G-protein coupled receptor 176 (515 aa).

Over methionine 1–glutamine 41 the chain is Extracellular. Asparagine 4, asparagine 11, asparagine 17, and asparagine 26 each carry an N-linked (GlcNAc...) asparagine glycan. The chain crosses the membrane as a helical span at residues phenylalanine 42–serine 64. Residues threonine 65–arginine 77 are Cytoplasmic-facing. A helical transmembrane segment spans residues phenylalanine 78–isoleucine 98. Over isoleucine 99–tryptophan 108 the chain is Extracellular. A helical membrane pass occupies residues tryptophan 109–valine 129. The Cytoplasmic segment spans residues threonine 130–lysine 157. Residues serine 158–phenylalanine 177 traverse the membrane as a helical segment. Over alanine 178 to tyrosine 204 the chain is Extracellular. The helical transmembrane segment at valine 205–isoleucine 225 threads the bilayer. Residues leucine 226 to histidine 264 are Cytoplasmic-facing. A helical transmembrane segment spans residues alanine 265–valine 285. Residues valine 286–leucine 301 lie on the Extracellular side of the membrane. A helical transmembrane segment spans residues leucine 302 to valine 322. Residues asparagine 323 to serine 515 lie on the Cytoplasmic side of the membrane. The disordered stretch occupies residues serine 407–serine 435. Pro residues predominate over residues glutamine 417–glycine 426.

Belongs to the G-protein coupled receptor 1 family. Expressed mainly in the brain, with prominent expression in the SCN (at protein level).

The protein resides in the cell membrane. Orphan receptor involved in normal circadian rhythm behavior. Acts through the G-protein subclass G(z)-alpha and has an agonist-independent basal activity to repress cAMP production. The chain is G-protein coupled receptor 176 (Gpr176) from Mus musculus (Mouse).